Consider the following 336-residue polypeptide: Biotin synthase (336 aa).

The Radical SAM core domain occupies 55–288; the sequence is GEAASLHACS…RTIIKFAAGR (234 aa). Residues Cys-73, Cys-77, and Cys-80 each coordinate [4Fe-4S] cluster. Positions 152, 213, and 283 each coordinate [2Fe-2S] cluster.

This sequence belongs to the radical SAM superfamily. Biotin synthase family. As to quaternary structure, homodimer. The cofactor is [4Fe-4S] cluster. [2Fe-2S] cluster is required as a cofactor.

It carries out the reaction (4R,5S)-dethiobiotin + (sulfur carrier)-SH + 2 reduced [2Fe-2S]-[ferredoxin] + 2 S-adenosyl-L-methionine = (sulfur carrier)-H + biotin + 2 5'-deoxyadenosine + 2 L-methionine + 2 oxidized [2Fe-2S]-[ferredoxin]. The protein operates within cofactor biosynthesis; biotin biosynthesis; biotin from 7,8-diaminononanoate: step 2/2. In terms of biological role, catalyzes the conversion of dethiobiotin (DTB) to biotin by the insertion of a sulfur atom into dethiobiotin via a radical-based mechanism. The protein is Biotin synthase of Chlorobium limicola (strain DSM 245 / NBRC 103803 / 6330).